Reading from the N-terminus, the 257-residue chain is Probable septum site-determining protein MinC (257 aa).

A compositionally biased stretch (low complexity) spans 123–141 (AVEAAAAPAAEPTPEPGAA). The tract at residues 123–144 (AVEAAAAPAAEPTPEPGAASQP) is disordered.

Belongs to the MinC family. In terms of assembly, interacts with MinD and FtsZ.

Its function is as follows. Cell division inhibitor that blocks the formation of polar Z ring septums. Rapidly oscillates between the poles of the cell to destabilize FtsZ filaments that have formed before they mature into polar Z rings. Prevents FtsZ polymerization. In Burkholderia multivorans (strain ATCC 17616 / 249), this protein is Probable septum site-determining protein MinC.